The primary structure comprises 181 residues: Large ribosomal subunit protein uL5c (181 aa).

It belongs to the universal ribosomal protein uL5 family. Part of the 50S ribosomal subunit; contacts the 5S rRNA.

The protein localises to the plastid. Its subcellular location is the chloroplast. Its function is as follows. Binds 5S rRNA, forms part of the central protuberance of the 50S subunit. The chain is Large ribosomal subunit protein uL5c (rpl5) from Heterosigma akashiwo (strain NIES-293 / 8280G21-1).